The following is a 284-amino-acid chain: UDP-N-acetylenolpyruvoylglucosamine reductase (284 aa).

The FAD-binding PCMH-type domain maps to 12–174 (KIGGRVKYLV…TRVMMSFKRE (163 aa)). Residue Arg153 is part of the active site. Ser203 acts as the Proton donor in catalysis. Glu274 is a catalytic residue.

Belongs to the MurB family. FAD is required as a cofactor.

It localises to the cytoplasm. The catalysed reaction is UDP-N-acetyl-alpha-D-muramate + NADP(+) = UDP-N-acetyl-3-O-(1-carboxyvinyl)-alpha-D-glucosamine + NADPH + H(+). It participates in cell wall biogenesis; peptidoglycan biosynthesis. Cell wall formation. This chain is UDP-N-acetylenolpyruvoylglucosamine reductase, found in Thermotoga petrophila (strain ATCC BAA-488 / DSM 13995 / JCM 10881 / RKU-1).